Here is a 497-residue protein sequence, read N- to C-terminus: MDSFIFLRSIGTKFGQLESSPAILSLTLAPILAIILLLLFRYNHRSSVKLPPGKLGFPLIGETIQLLRTLRSETPQKFFDDRLKKFGPVYMTSLIGHPTVVLCGPAGNKLVLSNEDKLVEMEGPKSFMKLIGEDSIVAKRGEDHRILRTALARFLGAQALQNYLGRMSSEIGHHFNEKWKGKDEVKVLPLVRGLIFSIASTLFFDVNDGHQQKQLHHLLETILVGSLSVPLDFPGTRYRKGLQARLKLDEILSSLIKRRRRDLRSGIASDDQDLLSVLLTFRDEKGNSLTDQGILDNFSAMFHASYDTTVAPMALIFKLLYSNPEYHEKVFQEQLEIIGNKKEGEEISWKDLKSMKYTWQAVQESLRMYPPVFGIFRKAITDIHYDGYTIPKGWRVLCSPYTTHLREEYFPEPEEFRPSRFEDEGRHVTPYTYVPFGGGLRTCPGWEFSKIEILLFVHHFVKNFSSYIPVDPNEKVLSDPLPPLPANGFSIKLFPRS.

Cys443 is a binding site for heme.

The protein belongs to the cytochrome P450 family. It depends on heme as a cofactor.

It carries out the reaction taxa-4(20),11-dien-5alpha-yl acetate + reduced [NADPH--hemoprotein reductase] + O2 = 10beta-hydroxytaxa-4(20),11-dien-5alpha-yl acetate + oxidized [NADPH--hemoprotein reductase] + H2O + H(+). It participates in alkaloid biosynthesis; taxol biosynthesis; 10-deacetyl-2-debenzoylbaccatin III from taxa-4(20),11-dien-5alpha-ol: step 2/3. Its function is as follows. Involved in the transformation of a taxadienyl acetate by hydroxylation at C10 to yield taxadien-5-alpha-acetoxy-10-beta-ol. This is Taxane 10-beta-hydroxylase (CYP725A1) from Taxus cuspidata (Japanese yew).